The sequence spans 311 residues: MSLSIIFMGTPEFSVPTLRLLADAGHRIVAVYTQPPRPGGRRGLDLQKSPVHQAAELLGLPVFTPVNFKDAEERERFAAFKADVAVVVAYGLLLPEAVLNGTRDGCYNGHASLLPRWRGAAPIQRAIMAGDEKTGMMVMKMDKGLDTGPVALSREVEIGPNMTAGELHDRLMQVGAKAMAEAMVKLEMNDLPLTPQPQDGVLYAAKIDKAETRIDFGRDARDVHNHIRGLAPFPGAWFELEIGGKPERVKVLGSELAEGQGTAGQLLTDDLLVGCASGAVRLTRLQKAGGKPLAAADFLRGTPLGAGTRLS.

112–115 (SLLP) lines the (6S)-5,6,7,8-tetrahydrofolate pocket.

Belongs to the Fmt family.

The enzyme catalyses L-methionyl-tRNA(fMet) + (6R)-10-formyltetrahydrofolate = N-formyl-L-methionyl-tRNA(fMet) + (6S)-5,6,7,8-tetrahydrofolate + H(+). In terms of biological role, attaches a formyl group to the free amino group of methionyl-tRNA(fMet). The formyl group appears to play a dual role in the initiator identity of N-formylmethionyl-tRNA by promoting its recognition by IF2 and preventing the misappropriation of this tRNA by the elongation apparatus. The polypeptide is Methionyl-tRNA formyltransferase (Rhizobium etli (strain ATCC 51251 / DSM 11541 / JCM 21823 / NBRC 15573 / CFN 42)).